The sequence spans 483 residues: Deoxyribodipyrimidine photo-lyase (483 aa).

A Photolyase/cryptochrome alpha/beta domain is found at glutamine 2 to leucine 136. (6R)-5,10-methylene-5,6,7,8-tetrahydrofolate contacts are provided by asparagine 109 and glutamate 110. Tyrosine 225 provides a ligand contact to FAD. Arginine 229 contacts DNA. Residue threonine 237 to serine 241 coordinates FAD. Interaction with DNA stretches follow at residues glutamine 278–tyrosine 285 and asparagine 345–arginine 346. An FAD-binding site is contributed by aspartate 376 to aspartate 378. DNA is bound at residue glutamine 408.

Belongs to the DNA photolyase class-1 family. Monomer. FAD serves as cofactor. (6R)-5,10-methylene-5,6,7,8-tetrahydrofolate is required as a cofactor.

The catalysed reaction is cyclobutadipyrimidine (in DNA) = 2 pyrimidine residues (in DNA).. Its function is as follows. Involved in repair of UV radiation-induced DNA damage. Catalyzes the light-dependent monomerization (300-600 nm) of cyclobutyl pyrimidine dimers (in cis-syn configuration), which are formed between adjacent bases on the same DNA strand upon exposure to ultraviolet radiation. This Buchnera aphidicola subsp. Acyrthosiphon pisum (strain APS) (Acyrthosiphon pisum symbiotic bacterium) protein is Deoxyribodipyrimidine photo-lyase (phrB).